The sequence spans 81 residues: Cytochrome b559 subunit alpha (81 aa).

A helical transmembrane segment spans residues 21 to 35 (IIHSITIPMLFIAGW). His23 serves as a coordination point for heme.

The protein belongs to the PsbE/PsbF family. In terms of assembly, heterodimer of an alpha subunit and a beta subunit. PSII is composed of 1 copy each of membrane proteins PsbA, PsbB, PsbC, PsbD, PsbE, PsbF, PsbH, PsbI, PsbJ, PsbK, PsbL, PsbM, PsbT, PsbX, PsbY, PsbZ, Psb30/Ycf12, peripheral proteins PsbO, CyanoQ (PsbQ), PsbU, PsbV and a large number of cofactors. It forms dimeric complexes. It depends on heme b as a cofactor.

It is found in the cellular thylakoid membrane. Functionally, this b-type cytochrome is tightly associated with the reaction center of photosystem II (PSII). PSII is a light-driven water:plastoquinone oxidoreductase that uses light energy to abstract electrons from H(2)O, generating O(2) and a proton gradient subsequently used for ATP formation. It consists of a core antenna complex that captures photons, and an electron transfer chain that converts photonic excitation into a charge separation. The polypeptide is Cytochrome b559 subunit alpha (Microcystis aeruginosa (strain NIES-843 / IAM M-2473)).